The following is a 238-amino-acid chain: Accessory gene regulator protein A (238 aa).

A Response regulatory domain is found at 2 to 125 (KIFVCEDDQR…LKMRIIDCLE (124 aa)). 4-aspartylphosphate is present on Asp-59. One can recognise an HTH LytTR-type domain in the interval 143 to 238 (IELKRGSNSV…FASVRNVKKI (96 aa)).

Its subcellular location is the cytoplasm. Its function is as follows. Required for high-level post-exponential phase expression of a series of secreted proteins. This is Accessory gene regulator protein A (agrA) from Staphylococcus epidermidis (strain ATCC 35984 / DSM 28319 / BCRC 17069 / CCUG 31568 / BM 3577 / RP62A).